A 483-amino-acid chain; its full sequence is Glutamate--tRNA ligase (483 aa).

A 'HIGH' region motif is present at residues 11-21 (PSPTGHLHIGN). 4 residues coordinate Zn(2+): C108, C110, C135, and H137. Positions 252–256 (KLSKR) match the 'KMSKS' region motif. K255 lines the ATP pocket.

It belongs to the class-I aminoacyl-tRNA synthetase family. Glutamate--tRNA ligase type 1 subfamily. As to quaternary structure, monomer. The cofactor is Zn(2+).

The protein localises to the cytoplasm. The enzyme catalyses tRNA(Glu) + L-glutamate + ATP = L-glutamyl-tRNA(Glu) + AMP + diphosphate. In terms of biological role, catalyzes the attachment of glutamate to tRNA(Glu) in a two-step reaction: glutamate is first activated by ATP to form Glu-AMP and then transferred to the acceptor end of tRNA(Glu). This chain is Glutamate--tRNA ligase, found in Bacillus pumilus (strain SAFR-032).